The sequence spans 252 residues: 5'-methylthioadenosine/S-adenosylhomocysteine nucleosidase (252 aa).

Glu20 serves as the catalytic Proton acceptor. Substrate-binding positions include Gly86, Ile160, and 181 to 182 (ME). Catalysis depends on Asp205, which acts as the Proton donor.

This sequence belongs to the PNP/UDP phosphorylase family. MtnN subfamily. In terms of assembly, homodimer.

It carries out the reaction S-adenosyl-L-homocysteine + H2O = S-(5-deoxy-D-ribos-5-yl)-L-homocysteine + adenine. The enzyme catalyses S-methyl-5'-thioadenosine + H2O = 5-(methylsulfanyl)-D-ribose + adenine. The catalysed reaction is 5'-deoxyadenosine + H2O = 5-deoxy-D-ribose + adenine. It participates in amino-acid biosynthesis; L-methionine biosynthesis via salvage pathway; S-methyl-5-thio-alpha-D-ribose 1-phosphate from S-methyl-5'-thioadenosine (hydrolase route): step 1/2. In terms of biological role, catalyzes the irreversible cleavage of the glycosidic bond in both 5'-methylthioadenosine (MTA) and S-adenosylhomocysteine (SAH/AdoHcy) to adenine and the corresponding thioribose, 5'-methylthioribose and S-ribosylhomocysteine, respectively. Also cleaves 5'-deoxyadenosine, a toxic by-product of radical S-adenosylmethionine (SAM) enzymes, into 5-deoxyribose and adenine. Thus, is required for in vivo function of the radical SAM enzymes biotin synthase and lipoic acid synthase, that are inhibited by 5'-deoxyadenosine accumulation. This Buchnera aphidicola subsp. Baizongia pistaciae (strain Bp) protein is 5'-methylthioadenosine/S-adenosylhomocysteine nucleosidase.